The following is a 416-amino-acid chain: Probable tRNA pseudouridine synthase D (416 aa).

The active-site Nucleophile is the D83. The 222-residue stretch at 158–379 (GFPNYFGYQR…PGGRRELLIR (222 aa)) folds into the TRUD domain.

This sequence belongs to the pseudouridine synthase TruD family.

The catalysed reaction is uridine(13) in tRNA = pseudouridine(13) in tRNA. Could be responsible for synthesis of pseudouridine from uracil-13 in transfer RNAs. The sequence is that of Probable tRNA pseudouridine synthase D from Thermococcus onnurineus (strain NA1).